We begin with the raw amino-acid sequence, 709 residues long: Frizzled-6 (709 aa).

An N-terminal signal peptide occupies residues 1 to 18 (MERSPFLLACILLPLVRG). The region spanning 19–132 (HSLFTCEPIT…CNRLPHCDDT (114 aa)) is the FZ domain. Topologically, residues 19–201 (HSLFTCEPIT…SDELDFAKSF (183 aa)) are extracellular. 5 disulfides stabilise this stretch: cysteine 24/cysteine 85, cysteine 32/cysteine 78, cysteine 69/cysteine 106, cysteine 95/cysteine 129, and cysteine 99/cysteine 123. N-linked (GlcNAc...) asparagine glycosylation is present at asparagine 38. Residues 202-222 (IGIVSIFCLCATLFTFLTFLI) form a helical membrane-spanning segment. Over 223-233 (DVRRFRYPERP) the chain is Cytoplasmic. Residues 234–254 (IIYYSVCYSIVSLMYFVGFLL) form a helical membrane-spanning segment. Over 255–284 (GNSTACNKADEKLELGDTVVLGSKNKACSV) the chain is Extracellular. A glycan (N-linked (GlcNAc...) asparagine) is linked at asparagine 256. A helical membrane pass occupies residues 285 to 305 (VFMFLYFFTMAGTVWWVILTI). At 306-324 (TWFLAAGRKWSCEAIEQKA) the chain is on the cytoplasmic side. Residues 325 to 345 (VWFHAVAWGAPGFLTVMLLAM) traverse the membrane as a helical segment. The Extracellular portion of the chain corresponds to 346–370 (NKVEGDNISGVCFVGLYDLDASRYF). N-linked (GlcNAc...) asparagine glycosylation is present at asparagine 352. A helical membrane pass occupies residues 371-391 (VLLPLCLCVFVGLSLLLAGII). The Cytoplasmic portion of the chain corresponds to 392–416 (SLNHVRQVIQHDGRNQEKLKKFMIR). The helical transmembrane segment at 417–437 (IGVFSGLYLVPLVTLLGCYVY) threads the bilayer. Topologically, residues 438 to 473 (ELVNRITWEMTWFSDHCHQYRIPCPYQANPKARPEL) are extracellular. Residues 474 to 494 (ALFMIKYLMTLIVGISAVFWV) form a helical membrane-spanning segment. At 495-709 (GSKKTCTEWA…EQGAGSHSDA (215 aa)) the chain is on the cytoplasmic side. The short motif at 498–503 (KTCTEW) is the Lys-Thr-X-X-X-Trp motif, mediates interaction with the PDZ domain of Dvl family members element. The segment covering 583 to 594 (QETSTEVHTSPE) has biased composition (polar residues). Positions 583–709 (QETSTEVHTS…EQGAGSHSDA (127 aa)) are disordered. The span at 596-616 (SVKEGRADRANTPSAKDRDCG) shows a compositional bias: basic and acidic residues. A compositionally biased stretch (polar residues) spans 620–629 (GPSSKLSGNR). The span at 630 to 644 (NGRESRAGGLKERSN) shows a compositional bias: basic and acidic residues. Position 656 is a phosphoserine (serine 656). Over residues 669-690 (CSTSQAASSPEPTSLKGSTSLP) the composition is skewed to polar residues. The span at 697-709 (ARKEQGAGSHSDA) shows a compositional bias: basic and acidic residues.

It belongs to the G-protein coupled receptor Fz/Smo family. Interacts with LMBR1L. Ubiquitinated by ZNRF3, leading to its degradation by the proteasome. As to expression, expressed in both hair cells and supporting cells in the utricle, saccule, cristae and the organ of Corti in the inner ear (at protein level).

The protein resides in the membrane. It is found in the cell membrane. Its subcellular location is the cell surface. The protein localises to the apical cell membrane. It localises to the cytoplasmic vesicle membrane. The protein resides in the endoplasmic reticulum membrane. In terms of biological role, receptor for Wnt proteins. Most of frizzled receptors are coupled to the beta-catenin canonical signaling pathway, which leads to the activation of disheveled proteins, inhibition of GSK-3 kinase, nuclear accumulation of beta-catenin and activation of Wnt target genes. A second signaling pathway involving PKC and calcium fluxes has been seen for some family members, but it is not yet clear if it represents a distinct pathway or if it can be integrated in the canonical pathway, as PKC seems to be required for Wnt-mediated inactivation of GSK-3 kinase. Both pathways seem to involve interactions with G-proteins. Activation by Wnt5A stimulates PKC activity via a G-protein-dependent mechanism. Involved in transduction and intercellular transmission of polarity information during tissue morphogenesis and/or in differentiated tissues. Together with FZD3, is involved in the neural tube closure and plays a role in the regulation of the establishment of planar cell polarity (PCP), particularly in the orientation of asymmetric bundles of stereocilia on the apical faces of a subset of auditory and vestibular sensory cells located in the inner ear. This is Frizzled-6 (Fzd6) from Mus musculus (Mouse).